A 449-amino-acid chain; its full sequence is UDP-N-acetylmuramate--L-alanine ligase (449 aa).

An ATP-binding site is contributed by 110 to 116 (GTHGKTT).

It belongs to the MurCDEF family.

It localises to the cytoplasm. It carries out the reaction UDP-N-acetyl-alpha-D-muramate + L-alanine + ATP = UDP-N-acetyl-alpha-D-muramoyl-L-alanine + ADP + phosphate + H(+). It participates in cell wall biogenesis; peptidoglycan biosynthesis. Cell wall formation. The chain is UDP-N-acetylmuramate--L-alanine ligase from Desulfitobacterium hafniense (strain Y51).